A 445-amino-acid chain; its full sequence is NAD-specific glutamate dehydrogenase (445 aa).

Lysine 124 is a catalytic residue. 235 to 241 (GFGNVAW) contributes to the NAD(+) binding site.

The protein belongs to the Glu/Leu/Phe/Val dehydrogenases family. In terms of assembly, homohexamer.

It catalyses the reaction L-glutamate + NAD(+) + H2O = 2-oxoglutarate + NH4(+) + NADH + H(+). This is NAD-specific glutamate dehydrogenase (gdhB) from Bacteroides fragilis (strain YCH46).